The following is a 706-amino-acid chain: Termination factor NPH-I homolog (706 aa).

The 166-residue stretch at 62–227 folds into the Helicase ATP-binding domain; sequence IGQGENTRGL…VPCFNMLSGR (166 aa). 75–82 lines the ATP pocket; it reads HQMGMGKT. The DEAH box motif lies at 168–171; the sequence is DEAH. In terms of domain architecture, Helicase C-terminal spans 417 to 599; sequence QCLQPLKVLE…HLNSAFRDLL (183 aa).

Belongs to the DEAD box helicase family. DEAH subfamily. As to quaternary structure, part of the viral DNA-directed RNA polymerase that consists of 8 polII-like subunits (RPB1, RPB2, RPB3, RPB5, RPB6, RPB7, RPB9, RPB10), a capping enzyme and a termination factor.

Its subcellular location is the virion. In terms of biological role, putative DNA-dependent ATPase required for providing the needed energy to achieve the termination of early transcripts. The sequence is that of Termination factor NPH-I homolog from African swine fever virus (isolate Tick/South Africa/Pretoriuskop Pr4/1996) (ASFV).